An 86-amino-acid chain; its full sequence is Small ribosomal subunit protein bS16 (86 aa).

This sequence belongs to the bacterial ribosomal protein bS16 family.

This Carboxydothermus hydrogenoformans (strain ATCC BAA-161 / DSM 6008 / Z-2901) protein is Small ribosomal subunit protein bS16.